Consider the following 194-residue polypeptide: FMN-dependent NADH:quinone oxidoreductase (194 aa).

Residues serine 10 and methionine 90–leucine 93 each bind FMN.

It belongs to the azoreductase type 1 family. In terms of assembly, homodimer. The cofactor is FMN.

The enzyme catalyses 2 a quinone + NADH + H(+) = 2 a 1,4-benzosemiquinone + NAD(+). It catalyses the reaction N,N-dimethyl-1,4-phenylenediamine + anthranilate + 2 NAD(+) = 2-(4-dimethylaminophenyl)diazenylbenzoate + 2 NADH + 2 H(+). Its function is as follows. Quinone reductase that provides resistance to thiol-specific stress caused by electrophilic quinones. In terms of biological role, also exhibits azoreductase activity. Catalyzes the reductive cleavage of the azo bond in aromatic azo compounds to the corresponding amines. The sequence is that of FMN-dependent NADH:quinone oxidoreductase from Haemophilus influenzae (strain 86-028NP).